A 230-amino-acid polypeptide reads, in one-letter code: Flagellar L-ring protein (230 aa).

The signal sequence occupies residues 1–26 (MKQVRLLPSATVRAACAVAVAAFAAG). Cysteine 27 carries the N-palmitoyl cysteine lipid modification. Cysteine 27 carries S-diacylglycerol cysteine lipidation.

Belongs to the FlgH family. In terms of assembly, the basal body constitutes a major portion of the flagellar organelle and consists of four rings (L,P,S, and M) mounted on a central rod.

It is found in the cell outer membrane. It localises to the bacterial flagellum basal body. In terms of biological role, assembles around the rod to form the L-ring and probably protects the motor/basal body from shearing forces during rotation. The protein is Flagellar L-ring protein of Burkholderia lata (strain ATCC 17760 / DSM 23089 / LMG 22485 / NCIMB 9086 / R18194 / 383).